We begin with the raw amino-acid sequence, 366 residues long: Glucose 1-dehydrogenase (366 aa).

Cysteine 39 serves as a coordination point for Zn(2+). Residue threonine 41 coordinates substrate. Positions 66 and 67 each coordinate Zn(2+). Asparagine 89 contacts substrate. Residues cysteine 93, cysteine 96, cysteine 99, and cysteine 107 each contribute to the Zn(2+) site. Substrate contacts are provided by glutamate 114, glutamine 150, and aspartate 154. Position 150 (glutamine 150) interacts with Zn(2+). Residues 189–192 (TGPI), 211–213 (NRR), 277–279 (FGF), 305–307 (LVN), and lysine 354 contribute to the NADP(+) site. Asparagine 307 contributes to the substrate binding site.

Belongs to the zinc-containing alcohol dehydrogenase family. Glucose 1-dehydrogenase subfamily. As to quaternary structure, homotetramer. Zn(2+) serves as cofactor.

It carries out the reaction D-glucose + NAD(+) = D-glucono-1,5-lactone + NADH + H(+). The enzyme catalyses D-glucose + NADP(+) = D-glucono-1,5-lactone + NADPH + H(+). The catalysed reaction is D-galactose + NAD(+) = D-galactono-1,4-lactone + NADH + H(+). It catalyses the reaction D-galactose + NADP(+) = D-galactono-1,5-lactone + NADPH + H(+). It carries out the reaction an aldopyranose + NAD(+) = aldono-1,5-lactone + NADH + H(+). The enzyme catalyses an aldopyranose + NADP(+) = aldono-1,5-lactone + NADPH + H(+). Its activity is regulated as follows. Inhibited by EDTA in vitro. Functionally, catalyzes the NAD(P)(+)-dependent oxidation of D-glucose to D-gluconate via gluconolactone. Displays broad substrate specificity since it is able to catalyze the oxidation of a number of alternative aldose sugars, such as D-galactose, D-xylose and L-arabinose, to the corresponding glyconate. Can utilize both NAD(+) and NADP(+) as electron acceptor. Physiologically, seems to be involved in the degradation of both glucose and galactose through a non-phosphorylative variant of the Entner-Doudoroff pathway. This chain is Glucose 1-dehydrogenase, found in Saccharolobus solfataricus (Sulfolobus solfataricus).